The primary structure comprises 349 residues: UDP-glucose 4-epimerase (349 aa).

NAD(+)-binding positions include 10 to 12 (GFI), 31 to 35 (DNFAN), 66 to 67 (DV), and lysine 92. 132–134 (SAT) lines the substrate pocket. The active-site Proton acceptor is tyrosine 158. 2 residues coordinate NAD(+): lysine 162 and tyrosine 186. Substrate is bound by residues 186 to 188 (YFN), 207 to 209 (NNL), 225 to 227 (TIY), arginine 240, and 303 to 306 (RPGD).

This sequence belongs to the NAD(P)-dependent epimerase/dehydratase family. NAD(+) serves as cofactor. Expressed in gonads, vulva, intestine, hypdermis and nervous system.

The enzyme catalyses UDP-alpha-D-glucose = UDP-alpha-D-galactose. It carries out the reaction UDP-N-acetyl-alpha-D-glucosamine = UDP-N-acetyl-alpha-D-galactosamine. The protein operates within carbohydrate metabolism; galactose metabolism. Functionally, catalyzes two distinct but analogous reactions: the reversible epimerization of UDP-glucose to UDP-galactose and the reversible epimerization of UDP-N-acetylglucosamine to UDP-N-acetylgalactosamine. The reaction with UDP-Gal plays a critical role in the Leloir pathway of galactose catabolism in which galactose is converted to the glycolytic intermediate glucose 6-phosphate. It contributes to the catabolism of dietary galactose and enables the endogenous biosynthesis of both UDP-Gal and UDP-GalNAc when exogenous sources are limited. Both UDP-sugar interconversions are important for the synthesis of glycoproteins and glycolipids. The chain is UDP-glucose 4-epimerase from Caenorhabditis elegans.